A 313-amino-acid polypeptide reads, in one-letter code: ADP-L-glycero-D-manno-heptose-6-epimerase (313 aa).

Residues 10–11 (MI), 31–32 (DN), K38, R53, 75–79 (EGACS), and N92 contribute to the NADP(+) site. The Proton acceptor role is filled by Y139. Residue K143 participates in NADP(+) binding. N174 contacts substrate. 2 residues coordinate NADP(+): V175 and K183. K183 acts as the Proton acceptor in catalysis. Residues S185, H192, 206–209 (FAGS), R214, and Y277 contribute to the substrate site.

This sequence belongs to the NAD(P)-dependent epimerase/dehydratase family. HldD subfamily. In terms of assembly, homopentamer. NADP(+) is required as a cofactor.

It catalyses the reaction ADP-D-glycero-beta-D-manno-heptose = ADP-L-glycero-beta-D-manno-heptose. Its pathway is nucleotide-sugar biosynthesis; ADP-L-glycero-beta-D-manno-heptose biosynthesis; ADP-L-glycero-beta-D-manno-heptose from D-glycero-beta-D-manno-heptose 7-phosphate: step 4/4. The protein operates within bacterial outer membrane biogenesis; LPS core biosynthesis. Catalyzes the interconversion between ADP-D-glycero-beta-D-manno-heptose and ADP-L-glycero-beta-D-manno-heptose via an epimerization at carbon 6 of the heptose. This is ADP-L-glycero-D-manno-heptose-6-epimerase from Vibrio vulnificus (strain CMCP6).